Consider the following 242-residue polypeptide: Small ribosomal subunit protein uS2 (242 aa).

It belongs to the universal ribosomal protein uS2 family.

This Colwellia psychrerythraea (strain 34H / ATCC BAA-681) (Vibrio psychroerythus) protein is Small ribosomal subunit protein uS2.